A 750-amino-acid chain; its full sequence is MELDKVKTHSLHCNAAVLSSLQAPTSATSPQSFTSKANAVAEAAFIENSNQQQNVQKDLNSHNRDCDSPVSSTSELEKEFDDLRKLHTSSLTNSVVVGKSTGSLNGDYSITSATSKTKTLESVVTINSATGSACLTIASTADHIKKRIPNSRTPTRKALRIKFYRNGDRFYPGVTIPVSNERYRSFERLFEDLTRLLEENVKIPGAVRTIYNMCGKKITSLDELEDGQSYVCSCNNENFKKVEYNPGSQPLSNLTLTNNSRPYNQRLAKHRPASPLKNGLLVGSSPLAVCGGGTGNGSPLIASKSSDRVTVVHPRIVTLIRSGTKPRRIMRLLLNKRNSPSFDHVLTAITQVVRLDTGYVRKVFTLSGISVVQLSDFFESDDVFFAYGTERINTAEDFKLEPEELKAINVIRKTMRTAGTTCKGPKPKMPIKSKKVYPPSVNSEAFKAATAPEDDRHATLLTSTGIEINELPSNIRSTYTLGKIIGDGNFAIVFKIKHRQTGDSYALKIIDKNKCKGKEHYIDAEVRVMKKLNHPHIISLILSVDQNTNMYLVLEYVSGGDLFDAITQVTRFAESQSRIMIRHLGAAMTYLHSMGIVHRDIKPENLLVKLDEHGNVLELKLADFGLACEVNDLLYAVCGTPTYVAPEILLEVGYGLKIDVWAAGIILYILLCGFPPFVAPDNQQEPLFDAIISGIYEFPDPYWSDIGDGVRDLIANMLQSDPDVRFTSEDILDHYWTIGNEGNECTTYKR.

Doublecortin domains lie at 159–245 (LRIK…VEYN) and 315–398 (RIVT…AEDF). The Protein kinase domain occupies 479–737 (YTLGKIIGDG…SEDILDHYWT (259 aa)). Residues 485 to 493 (IGDGNFAIV) and Lys-508 contribute to the ATP site. The Proton acceptor role is filled by Asp-600.

It belongs to the protein kinase superfamily. CAMK Ser/Thr protein kinase family. CaMK subfamily.

The catalysed reaction is L-seryl-[protein] + ATP = O-phospho-L-seryl-[protein] + ADP + H(+). The enzyme catalyses L-threonyl-[protein] + ATP = O-phospho-L-threonyl-[protein] + ADP + H(+). In Drosophila yakuba (Fruit fly), this protein is Serine/threonine-protein kinase GE16371.